Consider the following 81-residue polypeptide: Toxin-like peptide AaF1CA5 (81 aa).

Positions 1–22 are cleaved as a signal peptide; sequence MMKLMLFSIIVILFSLIGSIHG. One can recognise an LCN-type CS-alpha/beta domain in the interval 25–81; the sequence is VPGNYPLDSSDDTYLCAPLGENPFCIKICRKHGVKYGLMLRLPCWCEYFGKIKNVKI. 2 cysteine pairs are disulfide-bonded: C49-C68 and C53-C70.

The protein belongs to the long (3 C-C) scorpion toxin superfamily. As to expression, expressed by the venom gland.

The protein resides in the secreted. Probable neurotoxin that inhibits ion channels. The protein is Toxin-like peptide AaF1CA5 of Androctonus australis (Sahara scorpion).